A 1662-amino-acid chain; its full sequence is Cortactin-binding protein 2 (1662 aa).

4 disordered regions span residues 1-23, 202-235, 365-439, and 453-477; these read MATD…AGAA, KKKT…EFDT, IGVS…LHPG, and GNAN…SPTS. A coiled-coil region spans residues 118–275; that stretch reads RKMQERMSAQ…EQLKRGSDSK (158 aa). The span at 385 to 395 shows a compositional bias: low complexity; that stretch reads PSTGSTPDPTS. The span at 404-421 shows a compositional bias: polar residues; it reads AAPSTAQTPGITPQNSQA. Arg-497 bears the Asymmetric dimethylarginine mark. Residues 498 to 615 are disordered; that stretch reads FTGPQAGAPP…SSPQLPPKPS (118 aa). Polar residues-rich tracts occupy residues 516 to 529 and 582 to 592; these read DVST…TSVK and TVASPPSSLPQ. ANK repeat units lie at residues 708-738, 742-771, 775-804, 808-837, and 841-870; these read GRPT…DINY, DGHS…QVNA, NGFT…NINH, GGQT…DRSV, and DGWT…PAHG. A disordered region spans residues 871–897; it reads NSFSEEESESGVFDLDEGEESPEGKSK. The segment covering 874–891 has biased composition (acidic residues); it reads SEEESESGVFDLDEGEES. One copy of the ANK 6 repeat lies at 911-941; the sequence is EGWTAAHIAASKGFKNCLEILCRHGGLETER. The disordered stretch occupies residues 1446–1473; sequence KKKGESGAWRKVNTSPRRKSGRFSLPTW. Ser-1523 carries the phosphoserine modification. A disordered region spans residues 1614 to 1662; it reads VPRSKVTQCSQNTKRSSSSSNTRQIEINNNSKEENWNLHKNEHLEKPNK. Positions 1623–1637 are enriched in low complexity; sequence SQNTKRSSSSSNTRQ. Over residues 1644 to 1662 the composition is skewed to basic and acidic residues; the sequence is SKEENWNLHKNEHLEKPNK.

Interacts with CTTN/cortactin SH3 domain. Interacts with STRN, STRN4/zinedin and MOB4/phocein; this interactions mediate the association with the STRIPAK core complex and may regulate dendritic spine distribution of the STRIPAK complex in hippocampal neurons. Activation of glutamate receptors weakens the interaction with STRN and STRN4.

Its subcellular location is the cytoplasm. The protein localises to the cell cortex. It localises to the cell projection. It is found in the dendritic spine. In terms of biological role, regulates the dendritic spine distribution of CTTN/cortactin in hippocampal neurons, and thus controls dendritic spinogenesis and dendritic spine maintenance. Associates with the striatin-interacting phosphatase and kinase (STRIPAK) core complex to regulate dendritic spine distribution of the STRIPAK complex in hippocampal neurons. This is Cortactin-binding protein 2 (CTTNBP2) from Callithrix jacchus (White-tufted-ear marmoset).